A 702-amino-acid polypeptide reads, in one-letter code: Polyribonucleotide nucleotidyltransferase (702 aa).

Residues Asp-491 and Asp-497 each contribute to the Mg(2+) site. One can recognise a KH domain in the interval 558 to 618 (PKMKTFMIPV…TAIEKAYQLI (61 aa)). Residues 628–696 (GEKIIGPVVK…GKGKIKLQLI (69 aa)) form the S1 motif domain.

This sequence belongs to the polyribonucleotide nucleotidyltransferase family. It depends on Mg(2+) as a cofactor.

The protein localises to the cytoplasm. The catalysed reaction is RNA(n+1) + phosphate = RNA(n) + a ribonucleoside 5'-diphosphate. Functionally, involved in mRNA degradation. Catalyzes the phosphorolysis of single-stranded polyribonucleotides processively in the 3'- to 5'-direction. The chain is Polyribonucleotide nucleotidyltransferase from Spiroplasma citri.